We begin with the raw amino-acid sequence, 391 residues long: NADH-quinone oxidoreductase subunit D (391 aa).

It belongs to the complex I 49 kDa subunit family. In terms of assembly, NDH-1 is composed of 14 different subunits. Subunits NuoB, C, D, E, F, and G constitute the peripheral sector of the complex.

The protein localises to the cell inner membrane. It carries out the reaction a quinone + NADH + 5 H(+)(in) = a quinol + NAD(+) + 4 H(+)(out). In terms of biological role, NDH-1 shuttles electrons from NADH, via FMN and iron-sulfur (Fe-S) centers, to quinones in the respiratory chain. The immediate electron acceptor for the enzyme in this species is believed to be ubiquinone. Couples the redox reaction to proton translocation (for every two electrons transferred, four hydrogen ions are translocated across the cytoplasmic membrane), and thus conserves the redox energy in a proton gradient. In Rickettsia rickettsii (strain Sheila Smith), this protein is NADH-quinone oxidoreductase subunit D.